The primary structure comprises 150 residues: UPF0260 protein VIBHAR_03078 (150 aa).

Belongs to the UPF0260 family.

This chain is UPF0260 protein VIBHAR_03078, found in Vibrio campbellii (strain ATCC BAA-1116).